Here is a 415-residue protein sequence, read N- to C-terminus: Translation initiation factor 2 subunit gamma (415 aa).

In terms of domain architecture, tr-type G spans 7-206; it reads QPEVNIGVVG…GIEEYIKTPY (200 aa). Residues 16–23 form a G1 region; it reads GHVDHGKT. Residues Asp19, Thr23, Gly44, and Thr46 each coordinate Mg(2+). 19–24 is a GTP binding site; it reads DHGKTT. The tract at residues 44 to 48 is G2; it reads GMTIK. Residues Cys59, Cys62, Cys74, and Cys77 each contribute to the Zn(2+) site. Residues 93 to 96 form a G3 region; sequence DAPG. GTP is bound by residues 149 to 152 and 184 to 186; these read NKVD and SAL. The tract at residues 149-152 is G4; sequence NKVD. The interval 184 to 186 is G5; that stretch reads SAL.

This sequence belongs to the TRAFAC class translation factor GTPase superfamily. Classic translation factor GTPase family. EIF2G subfamily. In terms of assembly, heterotrimer composed of an alpha, a beta and a gamma chain. Mg(2+) serves as cofactor.

It carries out the reaction GTP + H2O = GDP + phosphate + H(+). EIF-2 functions in the early steps of protein synthesis by forming a ternary complex with GTP and initiator tRNA. This chain is Translation initiation factor 2 subunit gamma, found in Saccharolobus solfataricus (strain ATCC 35092 / DSM 1617 / JCM 11322 / P2) (Sulfolobus solfataricus).